The chain runs to 342 residues: S-adenosylmethionine:tRNA ribosyltransferase-isomerase (342 aa).

It belongs to the QueA family. In terms of assembly, monomer.

The protein resides in the cytoplasm. The enzyme catalyses 7-aminomethyl-7-carbaguanosine(34) in tRNA + S-adenosyl-L-methionine = epoxyqueuosine(34) in tRNA + adenine + L-methionine + 2 H(+). It participates in tRNA modification; tRNA-queuosine biosynthesis. Transfers and isomerizes the ribose moiety from AdoMet to the 7-aminomethyl group of 7-deazaguanine (preQ1-tRNA) to give epoxyqueuosine (oQ-tRNA). This is S-adenosylmethionine:tRNA ribosyltransferase-isomerase from Oceanobacillus iheyensis (strain DSM 14371 / CIP 107618 / JCM 11309 / KCTC 3954 / HTE831).